Consider the following 618-residue polypeptide: Dihydroxy-acid dehydratase (618 aa).

Mg(2+) is bound at residue D81. Residue C122 coordinates [2Fe-2S] cluster. Mg(2+) contacts are provided by D123 and K124. An N6-carboxylysine modification is found at K124. C195 lines the [2Fe-2S] cluster pocket. E490 is a binding site for Mg(2+). S516 functions as the Proton acceptor in the catalytic mechanism.

Belongs to the IlvD/Edd family. As to quaternary structure, homodimer. The cofactor is [2Fe-2S] cluster. Mg(2+) serves as cofactor.

The catalysed reaction is (2R)-2,3-dihydroxy-3-methylbutanoate = 3-methyl-2-oxobutanoate + H2O. The enzyme catalyses (2R,3R)-2,3-dihydroxy-3-methylpentanoate = (S)-3-methyl-2-oxopentanoate + H2O. The protein operates within amino-acid biosynthesis; L-isoleucine biosynthesis; L-isoleucine from 2-oxobutanoate: step 3/4. It participates in amino-acid biosynthesis; L-valine biosynthesis; L-valine from pyruvate: step 3/4. Its function is as follows. Functions in the biosynthesis of branched-chain amino acids. Catalyzes the dehydration of (2R,3R)-2,3-dihydroxy-3-methylpentanoate (2,3-dihydroxy-3-methylvalerate) into 2-oxo-3-methylpentanoate (2-oxo-3-methylvalerate) and of (2R)-2,3-dihydroxy-3-methylbutanoate (2,3-dihydroxyisovalerate) into 2-oxo-3-methylbutanoate (2-oxoisovalerate), the penultimate precursor to L-isoleucine and L-valine, respectively. The polypeptide is Dihydroxy-acid dehydratase (Gluconobacter oxydans (strain 621H) (Gluconobacter suboxydans)).